A 728-amino-acid polypeptide reads, in one-letter code: Probable subtilase-type serine protease DR_A0283 (728 aa).

The signal sequence occupies residues 1–22; it reads MPGALPMKKISLAVLSLTTLLA. Residues 23–148 constitute a propeptide that is removed on maturation; it reads ACGQPQTSPQ…RTAQDQLGAQ (126 aa). The 313-residue stretch at 159–471 folds into the Peptidase S8 domain; the sequence is QYALDSNHLH…YGLIRMDKLA (313 aa). Active-site charge relay system residues include aspartate 188, histidine 242, and serine 412.

The protein belongs to the peptidase S8 family.

Its subcellular location is the secreted. This Deinococcus radiodurans (strain ATCC 13939 / DSM 20539 / JCM 16871 / CCUG 27074 / LMG 4051 / NBRC 15346 / NCIMB 9279 / VKM B-1422 / R1) protein is Probable subtilase-type serine protease DR_A0283.